The chain runs to 561 residues: Putative transport protein YbjL (561 aa).

A run of 5 helical transmembrane segments spans residues 8-28, 32-52, 66-86, 94-114, and 158-178; these read LLNG…LCLG, LGSI…LLGQ, FMLF…SIFF, MLAL…GKLF, and NLSL…IVGA. 2 RCK C-terminal domains span residues 200–288 and 292–373; these read RGLD…SFRN and VFDR…RIGF. The next 5 membrane-spanning stretches (helical) occupy residues 383 to 403, 406 to 426, 451 to 471, 475 to 495, and 540 to 560; these read LLAF…TFQF, FSFG…LGFM, VFMA…LGAI, MLIA…LFGA, and AIAN…WPGL.

This sequence belongs to the AAE transporter (TC 2.A.81) family. YbjL subfamily.

The protein localises to the cell membrane. This is Putative transport protein YbjL from Shigella sonnei (strain Ss046).